A 123-amino-acid chain; its full sequence is Ribosome-binding factor A (123 aa).

Belongs to the RbfA family. Monomer. Binds 30S ribosomal subunits, but not 50S ribosomal subunits or 70S ribosomes.

It is found in the cytoplasm. Its function is as follows. One of several proteins that assist in the late maturation steps of the functional core of the 30S ribosomal subunit. Associates with free 30S ribosomal subunits (but not with 30S subunits that are part of 70S ribosomes or polysomes). Required for efficient processing of 16S rRNA. May interact with the 5'-terminal helix region of 16S rRNA. The chain is Ribosome-binding factor A from Syntrophus aciditrophicus (strain SB).